Here is a 122-residue protein sequence, read N- to C-terminus: Large ribosomal subunit protein uL14 (122 aa).

The protein belongs to the universal ribosomal protein uL14 family. As to quaternary structure, part of the 50S ribosomal subunit. Forms a cluster with proteins L3 and L19. In the 70S ribosome, L14 and L19 interact and together make contacts with the 16S rRNA in bridges B5 and B8.

In terms of biological role, binds to 23S rRNA. Forms part of two intersubunit bridges in the 70S ribosome. The chain is Large ribosomal subunit protein uL14 from Carboxydothermus hydrogenoformans (strain ATCC BAA-161 / DSM 6008 / Z-2901).